A 692-amino-acid chain; its full sequence is Elongation factor G (692 aa).

In terms of domain architecture, tr-type G spans 8 to 283 (EMTRNIGIMA…AVLDYMPAPT (276 aa)). Residues 17-24 (AHIDAGKT), 81-85 (DTPGH), and 135-138 (NKMD) contribute to the GTP site.

This sequence belongs to the TRAFAC class translation factor GTPase superfamily. Classic translation factor GTPase family. EF-G/EF-2 subfamily.

It localises to the cytoplasm. In terms of biological role, catalyzes the GTP-dependent ribosomal translocation step during translation elongation. During this step, the ribosome changes from the pre-translocational (PRE) to the post-translocational (POST) state as the newly formed A-site-bound peptidyl-tRNA and P-site-bound deacylated tRNA move to the P and E sites, respectively. Catalyzes the coordinated movement of the two tRNA molecules, the mRNA and conformational changes in the ribosome. This Citrifermentans bemidjiense (strain ATCC BAA-1014 / DSM 16622 / JCM 12645 / Bem) (Geobacter bemidjiensis) protein is Elongation factor G.